We begin with the raw amino-acid sequence, 305 residues long: Serine/threonine-protein kinase 16 (305 aa).

Residue G2 is the site of N-myristoyl glycine attachment. S-palmitoyl cysteine attachment occurs at residues C6 and C8. Positions 20 to 293 (YLFVQKLGEG…PVLLSQLEAL (274 aa)) constitute a Protein kinase domain. Residues 26–34 (LGEGGFSYV) and K49 each bind ATP. Catalysis depends on D148, which acts as the Proton acceptor. The activation loop stretch occupies residues 166–202 (DLGSMNQACIQVEGSRQALALQDWAAQRCTISYRAPE). The residue at position 197 (S197) is a Phosphoserine; by autocatalysis. Residue Y198 is modified to Phosphotyrosine; by autocatalysis.

Belongs to the protein kinase superfamily. Ser/Thr protein kinase family. In terms of assembly, monomer. Interacts with DRG1 (via its N-terminal); the interaction phosphorylates DRG1. In terms of processing, mainly autophosphorylated on serine/threonine residues. Also autophosphorylated on Tyr-198. Ubiquitously expressed at low levels. Relatively higher levels in testis, kidney and liver.

The protein resides in the cytoplasm. The protein localises to the perinuclear region. Its subcellular location is the membrane. It catalyses the reaction L-seryl-[protein] + ATP = O-phospho-L-seryl-[protein] + ADP + H(+). The catalysed reaction is L-threonyl-[protein] + ATP = O-phospho-L-threonyl-[protein] + ADP + H(+). The enzyme catalyses L-tyrosyl-[protein] + ATP = O-phospho-L-tyrosyl-[protein] + ADP + H(+). Membrane-associated protein kinase that phosphorylates on serine and threonine residues. In vitro substrates include DRG1, ENO1 and EIF4EBP1. Also autophosphorylates. May be involved in secretory vesicle trafficking or intracellular signaling. May have a role in regulating stromal-epithelial interactions that occur during ductal morphogenesis in the mammary gland. May be involved in TGF-beta signaling. Able to autophosphorylate on Tyr residue; it is however unclear whether it has tyrosine-protein kinase toward other proteins. The chain is Serine/threonine-protein kinase 16 (Stk16) from Mus musculus (Mouse).